The chain runs to 160 residues: Lipoprotein signal peptidase (160 aa).

The next 4 helical transmembrane spans lie at 7 to 27 (WFWL…YITV), 39 to 59 (LWPG…FSFF), 62 to 82 (GAVW…FLGW), and 96 to 116 (GFIL…GYVV). Active-site residues include Asp-117 and Asp-133. The chain crosses the membrane as a helical span at residues 126-146 (FPVFNLADTFINIGIFFLLLA).

Belongs to the peptidase A8 family.

It is found in the cell inner membrane. The enzyme catalyses Release of signal peptides from bacterial membrane prolipoproteins. Hydrolyzes -Xaa-Yaa-Zaa-|-(S,diacylglyceryl)Cys-, in which Xaa is hydrophobic (preferably Leu), and Yaa (Ala or Ser) and Zaa (Gly or Ala) have small, neutral side chains.. It functions in the pathway protein modification; lipoprotein biosynthesis (signal peptide cleavage). Functionally, this protein specifically catalyzes the removal of signal peptides from prolipoproteins. This is Lipoprotein signal peptidase from Gloeothece citriformis (strain PCC 7424) (Cyanothece sp. (strain PCC 7424)).